Here is a 252-residue protein sequence, read N- to C-terminus: 3-deoxy-manno-octulosonate cytidylyltransferase 2 (252 aa).

This sequence belongs to the KdsB family.

It localises to the cytoplasm. It carries out the reaction 3-deoxy-alpha-D-manno-oct-2-ulosonate + CTP = CMP-3-deoxy-beta-D-manno-octulosonate + diphosphate. It participates in nucleotide-sugar biosynthesis; CMP-3-deoxy-D-manno-octulosonate biosynthesis; CMP-3-deoxy-D-manno-octulosonate from 3-deoxy-D-manno-octulosonate and CTP: step 1/1. Its pathway is bacterial outer membrane biogenesis; lipopolysaccharide biosynthesis. Activates KDO (a required 8-carbon sugar) for incorporation into bacterial lipopolysaccharide in Gram-negative bacteria. This Actinobacillus pleuropneumoniae serotype 5b (strain L20) protein is 3-deoxy-manno-octulosonate cytidylyltransferase 2.